A 1411-amino-acid chain; its full sequence is DNA-directed RNA polymerase subunit beta' (1411 aa).

Zn(2+) contacts are provided by Cys-70, Cys-72, Cys-85, and Cys-88. Residues Asp-460, Asp-462, and Asp-464 each coordinate Mg(2+). Residues Cys-814, Cys-888, Cys-895, and Cys-898 each contribute to the Zn(2+) site.

It belongs to the RNA polymerase beta' chain family. The RNAP catalytic core consists of 2 alpha, 1 beta, 1 beta' and 1 omega subunit. When a sigma factor is associated with the core the holoenzyme is formed, which can initiate transcription. Requires Mg(2+) as cofactor. The cofactor is Zn(2+).

It catalyses the reaction RNA(n) + a ribonucleoside 5'-triphosphate = RNA(n+1) + diphosphate. In terms of biological role, DNA-dependent RNA polymerase catalyzes the transcription of DNA into RNA using the four ribonucleoside triphosphates as substrates. The chain is DNA-directed RNA polymerase subunit beta' from Idiomarina loihiensis (strain ATCC BAA-735 / DSM 15497 / L2-TR).